A 192-amino-acid chain; its full sequence is Glycerol-3-phosphate acyltransferase (192 aa).

5 helical membrane passes run 4–24 (FAIIYMLFTYLLGSISSDVVI), 48–68 (LVLVVFLCDVLKGMLPVWVGY), 74–94 (YFELGMVALAACLGHIFPIFF), 101–121 (GVATAFGAIAPIAWGVAGSML), and 125–145 (LLIFLFSGYVALSTVVTALIL).

This sequence belongs to the PlsY family. In terms of assembly, probably interacts with PlsX.

The protein resides in the cell inner membrane. The enzyme catalyses an acyl phosphate + sn-glycerol 3-phosphate = a 1-acyl-sn-glycero-3-phosphate + phosphate. It participates in lipid metabolism; phospholipid metabolism. Its function is as follows. Catalyzes the transfer of an acyl group from acyl-phosphate (acyl-PO(4)) to glycerol-3-phosphate (G3P) to form lysophosphatidic acid (LPA). This enzyme utilizes acyl-phosphate as fatty acyl donor, but not acyl-CoA or acyl-ACP. This chain is Glycerol-3-phosphate acyltransferase, found in Histophilus somni (strain 129Pt) (Haemophilus somnus).